The sequence spans 300 residues: D-alanine--D-alanine ligase (300 aa).

One can recognise an ATP-grasp domain in the interval K99 to K293. ATP is bound at residue I126–T181. The Mg(2+) site is built by D248, E260, and N262.

The protein belongs to the D-alanine--D-alanine ligase family. The cofactor is Mg(2+). Mn(2+) serves as cofactor.

The protein localises to the cytoplasm. The catalysed reaction is 2 D-alanine + ATP = D-alanyl-D-alanine + ADP + phosphate + H(+). The protein operates within cell wall biogenesis; peptidoglycan biosynthesis. In terms of biological role, cell wall formation. The polypeptide is D-alanine--D-alanine ligase (Clostridium botulinum (strain ATCC 19397 / Type A)).